The following is a 393-amino-acid chain: S-adenosylmethionine synthase (393 aa).

Histidine 16 provides a ligand contact to ATP. Aspartate 18 contacts Mg(2+). Glutamate 44 contacts K(+). L-methionine-binding residues include glutamate 57 and glutamine 100. The flexible loop stretch occupies residues 100 to 110 (QSNDIAQGVDH). ATP contacts are provided by residues 167–169 (DAK), 238–239 (RF), aspartate 247, 253–254 (RK), alanine 270, and lysine 274. An L-methionine-binding site is contributed by aspartate 247. L-methionine is bound at residue lysine 278.

The protein belongs to the AdoMet synthase family. As to quaternary structure, homotetramer; dimer of dimers. It depends on Mg(2+) as a cofactor. K(+) is required as a cofactor.

It localises to the cytoplasm. The catalysed reaction is L-methionine + ATP + H2O = S-adenosyl-L-methionine + phosphate + diphosphate. It functions in the pathway amino-acid biosynthesis; S-adenosyl-L-methionine biosynthesis; S-adenosyl-L-methionine from L-methionine: step 1/1. Its function is as follows. Catalyzes the formation of S-adenosylmethionine (AdoMet) from methionine and ATP. The overall synthetic reaction is composed of two sequential steps, AdoMet formation and the subsequent tripolyphosphate hydrolysis which occurs prior to release of AdoMet from the enzyme. In Acidovorax sp. (strain JS42), this protein is S-adenosylmethionine synthase.